We begin with the raw amino-acid sequence, 160 residues long: Epithelial membrane protein 1 (160 aa).

Residues 1-21 (MLVLLAGLFVVHIATAIMLFV) form a helical membrane-spanning segment. N35 and N43 each carry an N-linked (GlcNAc...) asparagine glycan. 2 helical membrane passes run 67-87 (FMIL…FQLF) and 95-115 (FFLS…GVSI). N128 carries an N-linked (GlcNAc...) asparagine glycan. The chain crosses the membrane as a helical span at residues 137-157 (FILTWICFCFSFIIGILYMVL).

This sequence belongs to the PMP-22/EMP/MP20 family.

The protein resides in the membrane. The protein is Epithelial membrane protein 1 (Emp1) of Mus musculus (Mouse).